We begin with the raw amino-acid sequence, 954 residues long: Glycine dehydrogenase (decarboxylating) (954 aa).

Lys-704 is subject to N6-(pyridoxal phosphate)lysine.

The protein belongs to the GcvP family. As to quaternary structure, the glycine cleavage system is composed of four proteins: P, T, L and H. Pyridoxal 5'-phosphate serves as cofactor.

It carries out the reaction N(6)-[(R)-lipoyl]-L-lysyl-[glycine-cleavage complex H protein] + glycine + H(+) = N(6)-[(R)-S(8)-aminomethyldihydrolipoyl]-L-lysyl-[glycine-cleavage complex H protein] + CO2. The glycine cleavage system catalyzes the degradation of glycine. The P protein binds the alpha-amino group of glycine through its pyridoxal phosphate cofactor; CO(2) is released and the remaining methylamine moiety is then transferred to the lipoamide cofactor of the H protein. In Vibrio vulnificus (strain YJ016), this protein is Glycine dehydrogenase (decarboxylating).